Reading from the N-terminus, the 171-residue chain is UPF0303 protein YPN_2129 (171 aa).

Belongs to the UPF0303 family.

This chain is UPF0303 protein YPN_2129, found in Yersinia pestis bv. Antiqua (strain Nepal516).